The sequence spans 121 residues: uncharacterized protein (121 aa).

A disordered region spans residues 101–121 (SIEPTATGSPETRDPDPSAYA). Over residues 111–121 (ETRDPDPSAYA) the composition is skewed to basic and acidic residues.

It localises to the mitochondrion. This is an uncharacterized protein from Arabidopsis thaliana (Mouse-ear cress).